The chain runs to 151 residues: MAVERIVISTGKRKRAIARAVIRPGRGRVWINGVPLEIYPIEMARIKMMEPLLIAGEGVRSLVDIRVRVEGGGVMGQADAVRMAIARGLVEFFRCEESDDELCRMMDKISRDLRTAFLEHDRTMLVGDPRRTEPEKYMRYSARRRWQKSYR.

The protein belongs to the universal ribosomal protein uS9 family.

This Aeropyrum pernix (strain ATCC 700893 / DSM 11879 / JCM 9820 / NBRC 100138 / K1) protein is Small ribosomal subunit protein uS9 (rps9).